Here is a 183-residue protein sequence, read N- to C-terminus: Adenine phosphoribosyltransferase (183 aa).

It belongs to the purine/pyrimidine phosphoribosyltransferase family. As to quaternary structure, homodimer.

Its subcellular location is the cytoplasm. It catalyses the reaction AMP + diphosphate = 5-phospho-alpha-D-ribose 1-diphosphate + adenine. Its pathway is purine metabolism; AMP biosynthesis via salvage pathway; AMP from adenine: step 1/1. Catalyzes a salvage reaction resulting in the formation of AMP, that is energically less costly than de novo synthesis. The sequence is that of Adenine phosphoribosyltransferase from Escherichia fergusonii (strain ATCC 35469 / DSM 13698 / CCUG 18766 / IAM 14443 / JCM 21226 / LMG 7866 / NBRC 102419 / NCTC 12128 / CDC 0568-73).